The sequence spans 383 residues: Bifunctional enzyme IspD/IspF (383 aa).

A 2-C-methyl-D-erythritol 4-phosphate cytidylyltransferase region spans residues 1 to 226 (MKIAAVIVAA…ERQIMSETIT (226 aa)). The segment at 227 to 383 (VTGQGYDVHR…QAIVTARLTT (157 aa)) is 2-C-methyl-D-erythritol 2,4-cyclodiphosphate synthase. A divalent metal cation-binding residues include D233 and H235. 4-CDP-2-C-methyl-D-erythritol 2-phosphate-binding positions include 233–235 (DVH) and 259–260 (HS). H267 contributes to the a divalent metal cation binding site. Residues 281 to 283 (DIG), 357 to 360 (TTTE), F364, and R367 each bind 4-CDP-2-C-methyl-D-erythritol 2-phosphate.

In the N-terminal section; belongs to the IspD/TarI cytidylyltransferase family. IspD subfamily. The protein in the C-terminal section; belongs to the IspF family. Requires a divalent metal cation as cofactor.

The catalysed reaction is 2-C-methyl-D-erythritol 4-phosphate + CTP + H(+) = 4-CDP-2-C-methyl-D-erythritol + diphosphate. It carries out the reaction 4-CDP-2-C-methyl-D-erythritol 2-phosphate = 2-C-methyl-D-erythritol 2,4-cyclic diphosphate + CMP. It functions in the pathway isoprenoid biosynthesis; isopentenyl diphosphate biosynthesis via DXP pathway; isopentenyl diphosphate from 1-deoxy-D-xylulose 5-phosphate: step 2/6. It participates in isoprenoid biosynthesis; isopentenyl diphosphate biosynthesis via DXP pathway; isopentenyl diphosphate from 1-deoxy-D-xylulose 5-phosphate: step 4/6. Its function is as follows. Bifunctional enzyme that catalyzes the formation of 4-diphosphocytidyl-2-C-methyl-D-erythritol from CTP and 2-C-methyl-D-erythritol 4-phosphate (MEP) (IspD), and catalyzes the conversion of 4-diphosphocytidyl-2-C-methyl-D-erythritol 2-phosphate (CDP-ME2P) to 2-C-methyl-D-erythritol 2,4-cyclodiphosphate (ME-CPP) with a corresponding release of cytidine 5-monophosphate (CMP) (IspF). This Maricaulis maris (strain MCS10) (Caulobacter maris) protein is Bifunctional enzyme IspD/IspF.